The sequence spans 487 residues: NAD(+)--arginine ADP-ribosyltransferase EFV (487 aa).

The stretch at 2-51 (SQLNKWQKELQALQKANYQETDNQLFNVYRQSLIDIKKRLKVYTENAESL) forms a coiled coil. Positions 315–487 (LDFFGQSDLQ…DNILEVTILG (173 aa)) constitute a TR mART core domain. NAD(+)-binding positions include 346–358 (TSDA…KILR) and 394–400 (RGVSANE). Catalysis depends on residues arginine 394, serine 415, and glutamate 463. Glutamate 463 lines the NAD(+) pocket.

It is found in the secreted. The catalysed reaction is L-arginyl-[protein] + NAD(+) = N(omega)-(ADP-D-ribosyl)-L-arginyl-[protein] + nicotinamide + H(+). A probable mono(ADP-ribosyl)transferase, it may ADP-ribosylate Arg in target protein(s). Upon expression in yeast cells causes cell death. This Enterococcus faecalis (strain ATCC 700802 / V583) protein is NAD(+)--arginine ADP-ribosyltransferase EFV.